The chain runs to 404 residues: MVSAVSRQLVNRQLNRVLLRNARIAPFARATRFYSSKYAQESENAKRHKMGLLIAGVAVAGAIVFVTPPQWKKYFRAAKKVEEVAESKEDPVSEAAEEVSESVQESTEEPQQSQEKETADVGNEQAQDESASSGDSEAKKAHDEFADQNEASEKESAPMGESADADQTAKDETVAEKTGNSKSESSESDQSEQDILSSDLEETMETVSEADKELHQISDNTVLSSEEDKTPKAEELKSTSPSGNDEEPKKEDDSSKTIHSLNSEKDMEAVEEEVKQESAYNPDTGEINWDCPCLGGMAHGPCGEEFKAAFSCFVYSEAEPKGIDCVEKFQHMQDCFRRYPEHYAEQLADPADDENVDHEKNLSEGKDTGVDSTPPKDEAYLKTEKEKKIEENASPDEDTASKKD.

A mitochondrion-targeting transit peptide spans 1–34 (MVSAVSRQLVNRQLNRVLLRNARIAPFARATRFY). The Mitochondrial matrix portion of the chain corresponds to 35 to 50 (SSKYAQESENAKRHKM). The chain crosses the membrane as a helical; Signal-anchor for type II membrane protein span at residues 51 to 71 (GLLIAGVAVAGAIVFVTPPQW). Residues 72–404 (KKYFRAAKKV…PDEDTASKKD (333 aa)) lie on the Mitochondrial intermembrane side of the membrane. The segment at 84–287 (VAESKEDPVS…SAYNPDTGEI (204 aa)) is disordered. Low complexity predominate over residues 101–113 (ESVQESTEEPQQS). Polar residues predominate over residues 124–135 (EQAQDESASSGD). Basic and acidic residues-rich tracts occupy residues 136 to 156 (SEAK…EKES), 226 to 237 (EEDKTPKAEELK), and 246 to 276 (EEPK…EVKQ). Disulfide bonds link C291/C293, C302/C335, and C312/C325. In terms of domain architecture, CHCH spans 299-343 (HGPCGEEFKAAFSCFVYSEAEPKGIDCVEKFQHMQDCFRRYPEHY). 2 short sequence motifs (cx9C motif) span residues 302–312 (CGEEFKAAFSC) and 325–335 (CVEKFQHMQDC). A disordered region spans residues 346 to 404 (QLADPADDENVDHEKNLSEGKDTGVDSTPPKDEAYLKTEKEKKIEENASPDEDTASKKD). The span at 357–391 (DHEKNLSEGKDTGVDSTPPKDEAYLKTEKEKKIEE) shows a compositional bias: basic and acidic residues.

Monomer. Requires Cu(2+) as cofactor. It depends on Zn(2+) as a cofactor.

The protein resides in the mitochondrion inner membrane. Required for the import and folding of small cysteine-containing proteins (small Tim) in the mitochondrial intermembrane space (IMS). Forms a redox cycle with ERV1 that involves a disulfide relay system. Precursor proteins to be imported into the IMS are translocated in their reduced form into the mitochondria. The oxidized form of MIA40 forms a transient intermolecular disulfide bridge with the reduced precursor protein, resulting in oxidation of the precursor protein that now contains an intramolecular disulfide bond and is able to undergo folding in the IMS. The sequence is that of Mitochondrial intermembrane space import and assembly protein 40 (MIA40) from Candida glabrata (strain ATCC 2001 / BCRC 20586 / JCM 3761 / NBRC 0622 / NRRL Y-65 / CBS 138) (Yeast).